Here is a 315-residue protein sequence, read N- to C-terminus: Neuroguidin (315 aa).

Ala2 bears the N-acetylalanine mark. The stretch at 13–41 (SAVTLLKNLQEQVMAVTAQVKSLTQKVQA) forms a coiled coil. Residues 41 to 174 (AGAYPTEKGL…KGVSKKYVPP (134 aa)) form a necessary for interaction with EIF4E region. Residues Ser121, Ser142, and Ser143 each carry the phosphoserine modification. Residues 124–169 (ENDPLRFKPHPSNMMSKLSSEDEEEDEAEDDQSEASGKKSVKGVSK) form a disordered region. Residues 144-156 (EDEEEDEAEDDQS) show a composition bias toward acidic residues. Residues 181-205 (YDETEAEREKKRLERAKRRALSSSV) are a coiled coil. Phosphoserine is present on residues Ser204 and Ser214. The disordered stretch occupies residues 277–315 (DISALTGGTVHLDEDQNPIKKRKKIPQKGRKKKGFRRRR). Positions 295-315 (IKKRKKIPQKGRKKKGFRRRR) are enriched in basic residues.

This sequence belongs to the SAS10 family. In terms of assembly, part of the small subunit (SSU) processome, composed of more than 70 proteins and the RNA chaperone small nucleolar RNA (snoRNA) U3. Interacts with CPEB1 and EIF4E.

The protein localises to the nucleus. Its subcellular location is the nucleolus. The protein resides in the chromosome. It is found in the centromere. It localises to the cytoplasm. The protein localises to the cell projection. Its subcellular location is the axon. The protein resides in the dendrite. It is found in the filopodium. Its function is as follows. Part of the small subunit (SSU) processome, first precursor of the small eukaryotic ribosomal subunit. During the assembly of the SSU processome in the nucleolus, many ribosome biogenesis factors, an RNA chaperone and ribosomal proteins associate with the nascent pre-rRNA and work in concert to generate RNA folding, modifications, rearrangements and cleavage as well as targeted degradation of pre-ribosomal RNA by the RNA exosome. Its dissociation from the complex determines the transition from state pre-A1 to state pre-A1*. Inhibits mRNA translation in a cytoplasmic polyadenylation element (CPE)-dependent manner. The chain is Neuroguidin from Homo sapiens (Human).